Here is a 23-residue protein sequence, read N- to C-terminus: Keratin (23 aa).

Residues 1–23 (YSSQLAQVQGLIGNVESQLAEIR) enclose the IF rod domain. The coil 2 stretch occupies residues 1-23 (YSSQLAQVQGLIGNVESQLAEIR).

Belongs to the intermediate filament family.

This chain is Keratin, found in Cervus elaphus (Red deer).